The primary structure comprises 212 residues: Ribonuclease HII (212 aa).

An RNase H type-2 domain is found at Gly-22 to Thr-211. Residues Asp-28, Glu-29, and Asp-120 each contribute to the a divalent metal cation site.

Belongs to the RNase HII family. The cofactor is Mn(2+). Requires Mg(2+) as cofactor.

The protein localises to the cytoplasm. It catalyses the reaction Endonucleolytic cleavage to 5'-phosphomonoester.. Its function is as follows. Endonuclease that specifically degrades the RNA of RNA-DNA hybrids. The polypeptide is Ribonuclease HII (Shewanella frigidimarina (strain NCIMB 400)).